We begin with the raw amino-acid sequence, 390 residues long: Aspergillopepsin-1 (390 aa).

The signal sequence occupies residues 1–19; the sequence is MVNTSLLAALTAYAVAVAA. A propeptide spans 20–67 (activation peptide); sequence APTAPQVKGFSVNQVAVPKGVYRHPAAQLAKAYGKYHATVPTQVAAAA. A Peptidase A1 domain is found at 84-387; it reads YITQVTVGDD…DASGPRLGFA (304 aa). Catalysis depends on residues D100 and D281.

It belongs to the peptidase A1 family. Monomer.

It is found in the secreted. The enzyme catalyses Hydrolysis of proteins with broad specificity. Generally favors hydrophobic residues in P1 and P1', but also accepts Lys in P1, which leads to activation of trypsinogen. Does not clot milk.. Inhibited by the microbial peptide pepstatin A. Secreted aspartic endopeptidase that allows assimilation of proteinaceous substrates. The scissile peptide bond is attacked by a nucleophilic water molecule activated by two aspartic residues in the active site. Shows a broad primary substrate specificity. Favors hydrophobic residues at the P1 and P1' positions, but also accepts a lysine residue in the P1 position, leading to the activation of trypsinogen and chymotrypsinogen A. Hydrolyzes myoglobin, hemoglobin and other natural proteins. Hydrolyzes equine myoglobin between positions 'Met-1' and 'Gly-2', 'Lys-43' and 'Phe-44', and 'Leu-70' and 'Thr-71'. The sequence is that of Aspergillopepsin-1 (pepA) from Aspergillus pseudoglaucus (Eurotium repens).